The chain runs to 644 residues: Serine/threonine kinase YeaG (644 aa).

The protein belongs to the PrkA family. As to quaternary structure, monomer.

It is found in the cytoplasm. It catalyses the reaction L-seryl-[protein] + ATP = O-phospho-L-seryl-[protein] + ADP + H(+). It carries out the reaction L-threonyl-[protein] + ATP = O-phospho-L-threonyl-[protein] + ADP + H(+). Kinase that plays a role in the adaptation to sustained nitrogen starvation. The chain is Serine/threonine kinase YeaG (yeaG) from Escherichia coli O157:H7.